A 328-amino-acid polypeptide reads, in one-letter code: Glycerol-3-phosphate dehydrogenase [NAD(P)+] (328 aa).

4 residues coordinate NADPH: Trp15, His35, Tyr51, and Lys107. Positions 107, 135, and 137 each coordinate sn-glycerol 3-phosphate. Residue Ala139 participates in NADPH binding. 5 residues coordinate sn-glycerol 3-phosphate: Lys190, Asp243, Ser253, Arg254, and Asn255. The Proton acceptor role is filled by Lys190. Arg254 lines the NADPH pocket. Leu276 and Glu278 together coordinate NADPH.

The protein belongs to the NAD-dependent glycerol-3-phosphate dehydrogenase family.

It localises to the cytoplasm. The enzyme catalyses sn-glycerol 3-phosphate + NAD(+) = dihydroxyacetone phosphate + NADH + H(+). It catalyses the reaction sn-glycerol 3-phosphate + NADP(+) = dihydroxyacetone phosphate + NADPH + H(+). Its pathway is membrane lipid metabolism; glycerophospholipid metabolism. Functionally, catalyzes the reduction of the glycolytic intermediate dihydroxyacetone phosphate (DHAP) to sn-glycerol 3-phosphate (G3P), the key precursor for phospholipid synthesis. This chain is Glycerol-3-phosphate dehydrogenase [NAD(P)+], found in Rhodopseudomonas palustris (strain BisA53).